The sequence spans 500 residues: Probable cytosol aminopeptidase (500 aa).

Residues Lys265 and Asp270 each contribute to the Mn(2+) site. Lys277 is a catalytic residue. 3 residues coordinate Mn(2+): Asp288, Asp347, and Glu349. Arg351 is a catalytic residue.

This sequence belongs to the peptidase M17 family. Requires Mn(2+) as cofactor.

The protein resides in the cytoplasm. The enzyme catalyses Release of an N-terminal amino acid, Xaa-|-Yaa-, in which Xaa is preferably Leu, but may be other amino acids including Pro although not Arg or Lys, and Yaa may be Pro. Amino acid amides and methyl esters are also readily hydrolyzed, but rates on arylamides are exceedingly low.. It carries out the reaction Release of an N-terminal amino acid, preferentially leucine, but not glutamic or aspartic acids.. In terms of biological role, presumably involved in the processing and regular turnover of intracellular proteins. Catalyzes the removal of unsubstituted N-terminal amino acids from various peptides. The sequence is that of Probable cytosol aminopeptidase from Corynebacterium diphtheriae (strain ATCC 700971 / NCTC 13129 / Biotype gravis).